Here is a 509-residue protein sequence, read N- to C-terminus: Lysine--tRNA ligase (509 aa).

Mg(2+)-binding residues include Glu418 and Glu425.

It belongs to the class-II aminoacyl-tRNA synthetase family. Homodimer. Mg(2+) is required as a cofactor.

The protein resides in the cytoplasm. The enzyme catalyses tRNA(Lys) + L-lysine + ATP = L-lysyl-tRNA(Lys) + AMP + diphosphate. The polypeptide is Lysine--tRNA ligase (Acinetobacter baumannii (strain AB307-0294)).